An 815-amino-acid chain; its full sequence is Cell division control protein 48 homolog D (815 aa).

The residue at position 2 (A2) is an N-acetylalanine. S42 carries the phosphoserine modification. Residues 249–256 (GPPGSGKT) and 522–529 (GPPGCGKT) contribute to the ATP site. At S720 the chain carries Phosphoserine. The tract at residues 772–815 (GSEFRFPDAPTGTTGAFPGAAATVGGVDPFATSGGAADDDDLYS) is disordered. Positions 780–798 (APTGTTGAFPGAAATVGGV) are enriched in low complexity.

Belongs to the AAA ATPase family.

The protein resides in the nucleus. Its subcellular location is the cytoplasm. It localises to the cytoskeleton. It is found in the phragmoplast. Probably functions in cell division and growth processes. Interacts with certain SNAREs as part of specialized membrane fusion events where vesicles from the same organelle fuse (homotypic fusion). The protein is Cell division control protein 48 homolog D (CDC48D) of Arabidopsis thaliana (Mouse-ear cress).